The sequence spans 304 residues: Protoheme IX farnesyltransferase 1 (304 aa).

Transmembrane regions (helical) follow at residues 24 to 44 (VVVLMLITSLIGMLLATKAPL), 47 to 67 (FVPWQVLIFGNLGIGLCAGAA), 99 to 119 (MALGFALLLALAGMAVLLAFT), 122 to 142 (LTAWLTLASLLGYAALYTGFL), 150 to 170 (IVIGGLAGAAPPLLGWVAITG), 176 to 196 (PLLLVLIIFAWTPPHFWALCI), 228 to 248 (LVLFAVSLMPFVIHMSGLVYL), and 280 to 300 (YSIVYLFLLFMALLVDHYLPL).

This sequence belongs to the UbiA prenyltransferase family. Protoheme IX farnesyltransferase subfamily.

It is found in the cell inner membrane. It carries out the reaction heme b + (2E,6E)-farnesyl diphosphate + H2O = Fe(II)-heme o + diphosphate. It functions in the pathway porphyrin-containing compound metabolism; heme O biosynthesis; heme O from protoheme: step 1/1. Functionally, converts heme B (protoheme IX) to heme O by substitution of the vinyl group on carbon 2 of heme B porphyrin ring with a hydroxyethyl farnesyl side group. The sequence is that of Protoheme IX farnesyltransferase 1 from Pseudomonas paraeruginosa (strain DSM 24068 / PA7) (Pseudomonas aeruginosa (strain PA7)).